We begin with the raw amino-acid sequence, 258 residues long: uncharacterized protein (258 aa).

An N-terminal signal peptide occupies residues 1 to 20 (MKCFQKLYIFILILIVLMAG). A lipid anchor (N-palmitoyl cysteine) is attached at C21. The S-diacylglycerol cysteine moiety is linked to residue C21.

It belongs to the staphylococcal tandem lipoprotein family.

The protein localises to the cell membrane. This is an uncharacterized protein from Staphylococcus aureus (strain COL).